Reading from the N-terminus, the 95-residue chain is Aspartyl/glutamyl-tRNA(Asn/Gln) amidotransferase subunit C (95 aa).

Belongs to the GatC family. As to quaternary structure, heterotrimer of A, B and C subunits.

The enzyme catalyses L-glutamyl-tRNA(Gln) + L-glutamine + ATP + H2O = L-glutaminyl-tRNA(Gln) + L-glutamate + ADP + phosphate + H(+). It carries out the reaction L-aspartyl-tRNA(Asn) + L-glutamine + ATP + H2O = L-asparaginyl-tRNA(Asn) + L-glutamate + ADP + phosphate + 2 H(+). In terms of biological role, allows the formation of correctly charged Asn-tRNA(Asn) or Gln-tRNA(Gln) through the transamidation of misacylated Asp-tRNA(Asn) or Glu-tRNA(Gln) in organisms which lack either or both of asparaginyl-tRNA or glutaminyl-tRNA synthetases. The reaction takes place in the presence of glutamine and ATP through an activated phospho-Asp-tRNA(Asn) or phospho-Glu-tRNA(Gln). The protein is Aspartyl/glutamyl-tRNA(Asn/Gln) amidotransferase subunit C of Thermoanaerobacter pseudethanolicus (strain ATCC 33223 / 39E) (Clostridium thermohydrosulfuricum).